Here is a 338-residue protein sequence, read N- to C-terminus: Fructose-1,6-bisphosphatase class 1 (338 aa).

Residues glutamate 92, aspartate 115, leucine 117, and aspartate 118 each contribute to the Mg(2+) site. Residues 118–121, asparagine 211, tyrosine 244, 262–264, and lysine 274 contribute to the substrate site; these read DGSS and YLY. Glutamate 280 contributes to the Mg(2+) binding site.

This sequence belongs to the FBPase class 1 family. As to quaternary structure, homotetramer. Mg(2+) is required as a cofactor.

The protein localises to the cytoplasm. The enzyme catalyses beta-D-fructose 1,6-bisphosphate + H2O = beta-D-fructose 6-phosphate + phosphate. Its pathway is carbohydrate biosynthesis; gluconeogenesis. In Vibrio parahaemolyticus serotype O3:K6 (strain RIMD 2210633), this protein is Fructose-1,6-bisphosphatase class 1.